Consider the following 198-residue polypeptide: Translation machinery-associated protein 22 (198 aa).

The SUI1 domain occupies 99–170 (VIIKREARTK…EVETYIHSLL (72 aa)).

It belongs to the DENR family. In terms of assembly, interacts with the 40S ribosomal subunit.

Its subcellular location is the cytoplasm. The protein is Translation machinery-associated protein 22 (TMA22) of Saccharomyces cerevisiae (strain YJM789) (Baker's yeast).